Here is a 309-residue protein sequence, read N- to C-terminus: GalNAc(5)-diNAcBac-PP-undecaprenol beta-1,3-glucosyltransferase (309 aa).

A helical transmembrane segment spans residues 273–291; the sequence is SLSIKINAPALILLILSII.

Belongs to the glycosyltransferase 2 family.

It is found in the membrane. The enzyme catalyses [alpha-D-GalNAc-(1-&gt;4)]4-alpha-D-GalNAc-(1-&gt;3)-alpha-D-diNAcBac-tri-trans,hepta-cis-undecaprenyl diphosphate + UDP-alpha-D-glucose = [alpha-D-GalNAc-(1-&gt;4)]2-[beta-D-Glc-(1-&gt;3)]-[alpha-D-GalNAc-(1-&gt;4)]2-alpha-D-GalNAc-(1-&gt;3)-alpha-D-diNAcBac-tri-trans,hepta-cis-undecaprenyl diphosphate + UDP + H(+). It functions in the pathway protein modification; protein glycosylation. Its function is as follows. Glucosyltransferase that adds he final branching glucose to complete the final heptasaccharide structure in the N-linked protein glycosylation pathway. This chain is GalNAc(5)-diNAcBac-PP-undecaprenol beta-1,3-glucosyltransferase (pglI), found in Campylobacter jejuni subsp. jejuni serotype O:2 (strain ATCC 700819 / NCTC 11168).